The primary structure comprises 614 residues: ATP-dependent zinc metalloprotease FtsH (614 aa).

Over Met-1–Arg-5 the chain is Cytoplasmic. A helical transmembrane segment spans residues Trp-6 to Gln-26. The Periplasmic portion of the chain corresponds to Thr-27–Ser-127. Residues Ile-128–Val-148 traverse the membrane as a helical segment. Residues Val-149–Gly-614 are Cytoplasmic-facing. Residue Gly-214–Thr-221 coordinates ATP. A Zn(2+)-binding site is contributed by His-436. Residue Glu-437 is part of the active site. Residues His-440 and Asp-513 each contribute to the Zn(2+) site.

This sequence in the central section; belongs to the AAA ATPase family. It in the C-terminal section; belongs to the peptidase M41 family. As to quaternary structure, homohexamer. It depends on Zn(2+) as a cofactor.

The protein localises to the cell inner membrane. Acts as a processive, ATP-dependent zinc metallopeptidase for both cytoplasmic and membrane proteins. Plays a role in the quality control of integral membrane proteins. The chain is ATP-dependent zinc metalloprotease FtsH from Opitutus terrae (strain DSM 11246 / JCM 15787 / PB90-1).